Here is a 406-residue protein sequence, read N- to C-terminus: Indole-3-pyruvate monooxygenase YUCCA1 (406 aa).

Gly-21 to Gly-26 serves as a coordination point for FAD. Residue Gly-184 to Gly-189 coordinates NADP(+).

It belongs to the FMO family. It depends on FAD as a cofactor. In terms of tissue distribution, expressed in coleoptile tips, root tips, leaf blade tips, shoot apical meristem, vasculature of stems and flowers.

The enzyme catalyses indole-3-pyruvate + NADPH + O2 + H(+) = (indol-3-yl)acetate + CO2 + NADP(+) + H2O. Functionally, involved in auxin biosynthesis. Converts the indole-3-pyruvic acid (IPA) produced by the TAA family to indole-3-acetic acid (IAA). Functions downstream of TAR2 in auxin biosynthesis. Functions upstream of WOX11, a transcription factor that promotes the development of crown roots. In Oryza sativa subsp. japonica (Rice), this protein is Indole-3-pyruvate monooxygenase YUCCA1.